A 128-amino-acid chain; its full sequence is Large ribosomal subunit protein bL17 (128 aa).

This sequence belongs to the bacterial ribosomal protein bL17 family. As to quaternary structure, part of the 50S ribosomal subunit. Contacts protein L32.

The sequence is that of Large ribosomal subunit protein bL17 from Haemophilus influenzae (strain 86-028NP).